Reading from the N-terminus, the 229-residue chain is MNNIAPVITIDGPSGSGKGTVAGILAKRLGWNLLDSGALYRLLAFAAHNHGVDLTNEELLKKLAAHLDVQFIAATDGQLQRIILEGDEVSDVIRTESVGSGASQVAALPAVREALLQRQRAFQEAPGLVADGRDMGTVVFPNAPLKIFLTASAEERARRRYLQLKGKVEGVSLSSLLDEIRARDERDTQRAVAPLKPAADAIQLDSTELSIDQVLERIMSEIAIRDIAG.

12–20 serves as a coordination point for ATP; the sequence is GPSGSGKGT.

This sequence belongs to the cytidylate kinase family. Type 1 subfamily.

It localises to the cytoplasm. The catalysed reaction is CMP + ATP = CDP + ADP. It carries out the reaction dCMP + ATP = dCDP + ADP. This is Cytidylate kinase from Pseudomonas fluorescens (strain Pf0-1).